Reading from the N-terminus, the 103-residue chain is MNKLTPDEAIDLAYDIFLEMAGENLDPADILLFNLQFEERGAVEMVETSENWDQEIGTLIDPDAFAEVWVGLVNDKDEMDDVFARFLISHDADNREYHVIWKE.

It belongs to the putative dsDNA mimic protein family.

In terms of biological role, may act as a double-stranded DNA (dsDNA) mimic. Probably regulates the activity of a dsDNA-binding protein. This chain is Putative double-stranded DNA mimic protein APJL_1366, found in Actinobacillus pleuropneumoniae serotype 3 (strain JL03).